The primary structure comprises 332 residues: 6-phosphogluconolactonase (332 aa).

It belongs to the cycloisomerase 2 family.

It carries out the reaction 6-phospho-D-glucono-1,5-lactone + H2O = 6-phospho-D-gluconate + H(+). It functions in the pathway carbohydrate degradation; pentose phosphate pathway; D-ribulose 5-phosphate from D-glucose 6-phosphate (oxidative stage): step 2/3. In terms of biological role, catalyzes the hydrolysis of 6-phosphogluconolactone to 6-phosphogluconate. This Pectobacterium carotovorum subsp. carotovorum (strain PC1) protein is 6-phosphogluconolactonase.